The chain runs to 423 residues: Replication factor C large subunit (423 aa).

ATP is bound at residue 63–70 (GPPGIGKT).

This sequence belongs to the activator 1 small subunits family. RfcL subfamily. As to quaternary structure, heteromultimer composed of small subunits (RfcS) and large subunits (RfcL).

In terms of biological role, part of the RFC clamp loader complex which loads the PCNA sliding clamp onto DNA. This is Replication factor C large subunit from Pyrobaculum islandicum (strain DSM 4184 / JCM 9189 / GEO3).